The chain runs to 500 residues: Probable cytosol aminopeptidase (500 aa).

The Mn(2+) site is built by Lys-261 and Asp-266. Lys-273 is an active-site residue. Positions 284, 343, and 345 each coordinate Mn(2+). Residue Arg-347 is part of the active site.

Belongs to the peptidase M17 family. It depends on Mn(2+) as a cofactor.

The protein resides in the cytoplasm. The enzyme catalyses Release of an N-terminal amino acid, Xaa-|-Yaa-, in which Xaa is preferably Leu, but may be other amino acids including Pro although not Arg or Lys, and Yaa may be Pro. Amino acid amides and methyl esters are also readily hydrolyzed, but rates on arylamides are exceedingly low.. It catalyses the reaction Release of an N-terminal amino acid, preferentially leucine, but not glutamic or aspartic acids.. Its function is as follows. Presumably involved in the processing and regular turnover of intracellular proteins. Catalyzes the removal of unsubstituted N-terminal amino acids from various peptides. This chain is Probable cytosol aminopeptidase, found in Wolbachia pipientis wMel.